The primary structure comprises 1141 residues: LRR receptor-like serine/threonine-protein kinase RGI1 (1141 aa).

An N-terminal signal peptide occupies residues 1–33 (MSLHSLIFFSSSSSSLLFSFFFIFIFCFSLSDA). Residues 34–726 (EQNPEASILY…DASRTRKLRL (693 aa)) are Extracellular-facing. A disulfide bridge links cysteine 69 with cysteine 77. Residue asparagine 71 is glycosylated (N-linked (GlcNAc...) asparagine). LRR repeat units follow at residues 80 to 104 (QGFI…LPAF), 105 to 128 (RSLQ…LGDC), 130 to 152 (GLKV…LSKL), 153 to 176 (RNLE…ISKC), 178 to 200 (KLKS…LGKL), 202 to 225 (GLEV…IGDC), 226 to 249 (SNLT…LGKL), 250 to 273 (KKLE…LGNC), 275 to 297 (ELVD…IGQL), 298 to 321 (TKLE…IGNC), 322 to 345 (SNLK…IGRL), 347 to 369 (FLEE…ISNC), 370 to 392 (SSLV…ELGT), 394 to 417 (TKLT…LADC), 418 to 441 (TDLQ…LFML), 443 to 464 (NLTK…EIGN), 465 to 489 (CSSL…IGSL), 490 to 513 (KKIN…IGSC), 514 to 537 (SELQ…VSSL), 538 to 561 (SGLQ…LGRL), 563 to 585 (SLNK…LGMC), 586 to 609 (SGLQ…LGDI), 610 to 634 (ENLE…IASL), 636 to 657 (KLSI…LANI), and 658 to 682 (ENLV…LFRQ). Asparagine 116 carries N-linked (GlcNAc...) asparagine glycosylation. Short sequence motifs (small peptide recognition) lie at residues 185 to 186 (FD) and 207 to 210 (RIGG). Asparagine 227 carries N-linked (GlcNAc...) asparagine glycosylation. 2 short sequence motifs (small peptide recognition) span residues 230-235 (VLGLAE) and tyrosine 258. N-linked (GlcNAc...) asparagine glycosylation is present at asparagine 272. The Small peptide recognition signature appears at 280 to 282 (FLY). Residue asparagine 320 is glycosylated (N-linked (GlcNAc...) asparagine). Short sequence motifs (small peptide recognition) lie at residues 328-331 (DLSL) and 350-352 (EFM). Asparagine 368 is a glycosylation site (N-linked (GlcNAc...) asparagine). Short sequence motifs (small peptide recognition) lie at residues 398-402 (LFFAW) and 424-427 (DLSR). Asparagine 443 carries an N-linked (GlcNAc...) asparagine glycan. The Small peptide recognition signature appears at 446-450 (KLLLI). N-linked (GlcNAc...) asparagine glycosylation is present at asparagine 464. Residues 470–472 (RLR) carry the Small peptide recognition motif. Asparagine 523 is a glycosylation site (N-linked (GlcNAc...) asparagine). A glycan (N-linked (GlcNAc...) asparagine) is linked at asparagine 617. The N-linked (GlcNAc...) asparagine glycan is linked to asparagine 664. Residues 727 to 747 (TLALLITLTVVLMILGAVAVI) form a helical membrane-spanning segment. At 748–1141 (RARRNIDNER…LLYSSSSSIE (394 aa)) the chain is on the cytoplasmic side. Residues 786–1074 (LVEPNVIGKG…EIKQEREEYA (289 aa)) enclose the Protein kinase domain. ATP-binding positions include 792–800 (IGKGCSGVV) and lysine 814. Phosphotyrosine occurs at positions 868 and 906. The Proton acceptor role is filled by aspartate 919. Tyrosine 962 and tyrosine 969 each carry phosphotyrosine.

It belongs to the protein kinase superfamily. Ser/Thr protein kinase family. Interacts with beet curly top virus AL4/C4. Binds to RGF peptides such as RGF1, GLV5/CLEL1/RGF2, GLV7/CLEL3/RGF3, GLV3/RGF4, GLV10/CLEL7/RGF5 and RGF10/CLELN; these interactions trigger the formation of heterodimers with SERK1, SERK2 or BAK1/SERK3 via LRR regions. Interacts with UBP13. Phosphorylated and ubiquitinated upon interaction with RGF1, thus leading to activation a subsequent degradation. Stabilized by UBP12 and UBP13-mediated deubiquitination. In terms of processing, autophosphorylated. Expressed in roots.

The protein localises to the cell membrane. It catalyses the reaction L-seryl-[protein] + ATP = O-phospho-L-seryl-[protein] + ADP + H(+). The enzyme catalyses L-threonyl-[protein] + ATP = O-phospho-L-threonyl-[protein] + ADP + H(+). Functionally, together with RGI2, RGI3, RGI4 and RGI5, acts as a receptor of RGF peptides (e.g. RGF1, GLV5/CLEL1/RGF2, GLV7/CLEL3/RGF3, GLV3/RGF4, GLV10/CLEL7/RGF5 and RGF10/CLELN), peptide hormones which maintain the postembryonic root stem cell niche by regulating the expression levels and patterns of the transcription factor PLETHORA (PLT, e.g. PLT1 and PLT2). Links RGF peptides signal with their downstream components. The protein is LRR receptor-like serine/threonine-protein kinase RGI1 of Arabidopsis thaliana (Mouse-ear cress).